We begin with the raw amino-acid sequence, 311 residues long: Aspartate carbamoyltransferase catalytic subunit (311 aa).

Carbamoyl phosphate contacts are provided by arginine 59 and threonine 60. Lysine 87 is an L-aspartate binding site. 3 residues coordinate carbamoyl phosphate: arginine 109, histidine 139, and glutamine 142. Residues arginine 172 and arginine 224 each contribute to the L-aspartate site. Carbamoyl phosphate contacts are provided by alanine 265 and proline 266.

This sequence belongs to the aspartate/ornithine carbamoyltransferase superfamily. ATCase family. Heterododecamer (2C3:3R2) of six catalytic PyrB chains organized as two trimers (C3), and six regulatory PyrI chains organized as three dimers (R2).

The catalysed reaction is carbamoyl phosphate + L-aspartate = N-carbamoyl-L-aspartate + phosphate + H(+). It functions in the pathway pyrimidine metabolism; UMP biosynthesis via de novo pathway; (S)-dihydroorotate from bicarbonate: step 2/3. Catalyzes the condensation of carbamoyl phosphate and aspartate to form carbamoyl aspartate and inorganic phosphate, the committed step in the de novo pyrimidine nucleotide biosynthesis pathway. This is Aspartate carbamoyltransferase catalytic subunit from Streptococcus equi subsp. equi (strain 4047).